Consider the following 391-residue polypeptide: D-gluconate/D-galactonate dehydratase (391 aa).

Glu198 is a binding site for Mg(2+). His200 serves as the catalytic Proton donor. Positions 224 and 250 each coordinate Mg(2+). His300 (proton acceptor) is an active-site residue.

Belongs to the mandelate racemase/muconate lactonizing enzyme family. GaD subfamily. In terms of assembly, homooctamer. The cofactor is Mg(2+).

It catalyses the reaction D-gluconate = 2-dehydro-3-deoxy-D-gluconate + H2O. The catalysed reaction is D-galactonate = 2-dehydro-3-deoxy-D-galactonate + H2O. Its pathway is carbohydrate acid metabolism; D-gluconate degradation. Its function is as follows. Involved in the degradation of glucose and galactose via the nonphosphorylative variant of Entner-Doudoroff pathway. Catalyzes the dehydration of gluconate to produce 2-keto-3-deoxygluconate (KDG). It is also able to catalyze the dehydration of galactonate to produce 2-keto-3-deoxygalactonate (KDGal). This Picrophilus torridus (strain ATCC 700027 / DSM 9790 / JCM 10055 / NBRC 100828 / KAW 2/3) protein is D-gluconate/D-galactonate dehydratase.